The following is a 1112-amino-acid chain: Glutamate receptor-interacting protein 1 (1112 aa).

Ser43 is subject to Phosphoserine. PDZ domains follow at residues 53 to 136 (VVEL…EYEL), 150 to 238 (TVEV…EYDV), 252 to 336 (LVEV…LPHH), 471 to 560 (EVVL…EFDV), 572 to 657 (HVKL…RKDE), and 672 to 754 (TVEL…KKQT). 3 disordered regions span residues 752 to 796 (KQTD…VYPS), 841 to 886 (KRAS…AEQE), and 922 to 963 (NHEA…DVGR). The segment covering 869–880 (STASGFAGASDS) has biased composition (low complexity). The span at 928–958 (ARSQLGRQASFQERSNSRPHYSQTTRSNTLP) shows a compositional bias: polar residues. Residues 988-1070 (KVTLYKDSGM…KLDLVISRNP (83 aa)) form the PDZ 7 domain. The disordered stretch occupies residues 1077–1112 (IEQPALPSDWSEQNSAFFQQPSHGGNLETREPTNTL). The span at 1086–1099 (WSEQNSAFFQQPSH) shows a compositional bias: polar residues.

Interacts with EFNB1, EPHA7, EPHB2, EFNB3, KIF5A, KIF5C, KIF5B and the C-terminal tail of PRLHR. Forms a ternary complex with GRIA2 and CSPG4. Can form homomultimers or heteromultimers with GRIP2. Interacts with GRIA2, GRIA3, GRIPAP1/GRASP1, PPFIA1, PPFIA4, FRAS1, PLCD4, PTPRF and liprins-alpha. Interacts with ATAD1 in an ATP-dependent manner. ATAD1-catalyzed ATP hydrolysis disrupts binding to ATAD1 and to GRIA2 and leads to AMPAR complex disassembly. Interacts with SLC30A9. Interacts with BUD23. Forms a complex with NSG1, GRIA2 and STX12; controls the intracellular fate of AMPAR and the endosomal sorting of the GRIA2 subunit toward recycling and membrane targeting. Interacts with NSG1. Expressed in brain, testis and retina. In brain highly expressed in the olfactory bulb, cortex and hippocampus and lower level in thalamus, cerebellum and spinal cord. In brain it is found in the perikaryon, dendrites, dendritic shafts, dendritic spines and, excitatory and inhibitory synapses of neurons. In retina, it is most abundant in the plexiform layers than in perikarya.

Its subcellular location is the cytoplasmic vesicle. The protein resides in the perikaryon. It is found in the cell projection. The protein localises to the dendrite. It localises to the cytoplasm. Its subcellular location is the endomembrane system. The protein resides in the postsynaptic cell membrane. It is found in the postsynaptic density. The protein localises to the endoplasmic reticulum membrane. In terms of biological role, may play a role as a localized scaffold for the assembly of a multiprotein signaling complex and as mediator of the trafficking of its binding partners at specific subcellular location in neurons. Through complex formation with NSG1, GRIA2 and STX12 controls the intracellular fate of AMPAR and the endosomal sorting of the GRIA2 subunit toward recycling and membrane targeting. The chain is Glutamate receptor-interacting protein 1 (Grip1) from Rattus norvegicus (Rat).